A 327-amino-acid polypeptide reads, in one-letter code: Phenylalanine--tRNA ligase alpha subunit (327 aa).

Mg(2+) is bound at residue E252.

It belongs to the class-II aminoacyl-tRNA synthetase family. Phe-tRNA synthetase alpha subunit type 1 subfamily. Tetramer of two alpha and two beta subunits. Mg(2+) is required as a cofactor.

The protein resides in the cytoplasm. It carries out the reaction tRNA(Phe) + L-phenylalanine + ATP = L-phenylalanyl-tRNA(Phe) + AMP + diphosphate + H(+). This chain is Phenylalanine--tRNA ligase alpha subunit, found in Aliivibrio fischeri (strain ATCC 700601 / ES114) (Vibrio fischeri).